Reading from the N-terminus, the 402-residue chain is Alkaline proteinase (402 aa).

The signal sequence occupies residues 1 to 20 (MVTLRRLAVLLGAIPAALAA). The propeptide occupies 21-120 (PTTQKREVVP…EQDEGEFSTA (100 aa)). One can recognise an Inhibitor I9 domain in the interval 32–108 (KYIVTLKEGA…EVEEDQIWHL (77 aa)). The Peptidase S8 domain maps to 128–402 (AWGLGTISHR…NRILYNGNGA (275 aa)). Residues D160, H191, and S347 each act as charge relay system in the active site. Positions 382 to 392 (GRVSNPGSGSP) are enriched in polar residues. The tract at residues 382–402 (GRVSNPGSGSPNRILYNGNGA) is disordered.

Belongs to the peptidase S8 family.

This Hapsidospora chrysogena (Acremonium chrysogenum) protein is Alkaline proteinase (ALP).